The sequence spans 299 residues: GTPase Era (299 aa).

The Era-type G domain maps to 8–176 (RCGYVAIVGR…EKLVGERLPE (169 aa)). The segment at 16 to 23 (GRPNVGKS) is G1. 16–23 (GRPNVGKS) is a binding site for GTP. The G2 stretch occupies residues 42–46 (QTTRH). The segment at 63 to 66 (DTPG) is G3. GTP is bound by residues 63–67 (DTPGL) and 125–128 (NKAD). The segment at 125 to 128 (NKAD) is G4. The tract at residues 155–157 (ISA) is G5. A KH type-2 domain is found at 199–283 (IREKIMRQLG…MLNLWVKVKG (85 aa)).

Belongs to the TRAFAC class TrmE-Era-EngA-EngB-Septin-like GTPase superfamily. Era GTPase family. Monomer.

The protein resides in the cytoplasm. It localises to the cell inner membrane. An essential GTPase that binds both GDP and GTP, with rapid nucleotide exchange. Plays a role in 16S rRNA processing and 30S ribosomal subunit biogenesis and possibly also in cell cycle regulation and energy metabolism. This Ectopseudomonas mendocina (strain ymp) (Pseudomonas mendocina) protein is GTPase Era.